The primary structure comprises 544 residues: Chaperonin GroEL 1 (544 aa).

Residues 29 to 32 (TLGP), 86 to 90 (DGTTT), Gly-413, 479 to 481 (NAA), and Asp-495 each bind ATP.

Belongs to the chaperonin (HSP60) family. In terms of assembly, forms a cylinder of 14 subunits composed of two heptameric rings stacked back-to-back. Interacts with the co-chaperonin GroES.

It localises to the cytoplasm. It catalyses the reaction ATP + H2O + a folded polypeptide = ADP + phosphate + an unfolded polypeptide.. Its function is as follows. Together with its co-chaperonin GroES, plays an essential role in assisting protein folding. The GroEL-GroES system forms a nano-cage that allows encapsulation of the non-native substrate proteins and provides a physical environment optimized to promote and accelerate protein folding. The sequence is that of Chaperonin GroEL 1 from Synechococcus sp. (strain CC9902).